We begin with the raw amino-acid sequence, 130 residues long: Large ribosomal subunit protein eL22 (130 aa).

Residues 1–21 (MPGKTAQKGGRPSGKGKKKKQ) form a disordered region. The Nuclear localization signal signature appears at 17–20 (KKKK).

Belongs to the eukaryotic ribosomal protein eL22 family.

The protein is Large ribosomal subunit protein eL22 (RPL22) of Tripneustes gratilla (Hawaian sea urchin).